Reading from the N-terminus, the 266-residue chain is F-actin-capping protein subunit beta (266 aa).

It belongs to the F-actin-capping protein beta subunit family. In terms of assembly, component of the F-actin capping complex, composed of a heterodimer of an alpha and a beta subunit.

The protein resides in the cytoplasm. The protein localises to the cytoskeleton. Its subcellular location is the actin patch. Functionally, F-actin-capping proteins bind in a Ca(2+)-independent manner to the fast growing ends of actin filaments (barbed end) thereby blocking the exchange of subunits at these ends. Unlike other capping proteins (such as gelsolin and severin), these proteins do not sever actin filaments. The sequence is that of F-actin-capping protein subunit beta (cap2) from Emericella nidulans (strain FGSC A4 / ATCC 38163 / CBS 112.46 / NRRL 194 / M139) (Aspergillus nidulans).